Here is a 505-residue protein sequence, read N- to C-terminus: Glycerol kinase (505 aa).

T14 serves as a coordination point for ADP. The ATP site is built by T14, T15, and S16. T14 serves as a coordination point for sn-glycerol 3-phosphate. R18 is a binding site for ADP. R84, E85, Y136, and D246 together coordinate sn-glycerol 3-phosphate. Glycerol contacts are provided by R84, E85, Y136, D246, and Q247. Residues T268 and G311 each contribute to the ADP site. The ATP site is built by T268, G311, Q315, and G412. ADP-binding residues include G412 and N416.

It belongs to the FGGY kinase family.

The catalysed reaction is glycerol + ATP = sn-glycerol 3-phosphate + ADP + H(+). The protein operates within polyol metabolism; glycerol degradation via glycerol kinase pathway; sn-glycerol 3-phosphate from glycerol: step 1/1. Inhibited by fructose 1,6-bisphosphate (FBP). Key enzyme in the regulation of glycerol uptake and metabolism. Catalyzes the phosphorylation of glycerol to yield sn-glycerol 3-phosphate. This chain is Glycerol kinase, found in Vibrio cholerae serotype O1 (strain M66-2).